The sequence spans 129 residues: Small ribosomal subunit protein uS11 (129 aa).

It belongs to the universal ribosomal protein uS11 family. Part of the 30S ribosomal subunit. Interacts with proteins S7 and S18. Binds to IF-3.

In terms of biological role, located on the platform of the 30S subunit, it bridges several disparate RNA helices of the 16S rRNA. Forms part of the Shine-Dalgarno cleft in the 70S ribosome. This is Small ribosomal subunit protein uS11 from Oleidesulfovibrio alaskensis (strain ATCC BAA-1058 / DSM 17464 / G20) (Desulfovibrio alaskensis).